A 410-amino-acid polypeptide reads, in one-letter code: Arginine deiminase (410 aa).

The active-site Amidino-cysteine intermediate is Cys-400.

The protein belongs to the arginine deiminase family.

It localises to the cytoplasm. The catalysed reaction is L-arginine + H2O = L-citrulline + NH4(+). The protein operates within amino-acid degradation; L-arginine degradation via ADI pathway; carbamoyl phosphate from L-arginine: step 1/2. The polypeptide is Arginine deiminase (Lactococcus lactis subsp. cremoris (strain MG1363)).